Consider the following 283-residue polypeptide: Myeloid differentiation primary response protein MyD88-A (283 aa).

One can recognise a Death domain in the interval 27–105 (RLCLYLNPDA…DILTDLGPLI (79 aa)). The intermediate domain stretch occupies residues 106-143 (EADCMKYLEKKHVPLPIQDDKVDSSEQYRITKSDDPYG). The TIR domain occupies 147 to 281 (ETFDAFICYC…WFWDKLAKAL (135 aa)).

The protein resides in the cytoplasm. In terms of biological role, adapter protein involved in the Toll-like receptor and IL-1 receptor signaling pathway in the innate immune response. Activates expression of target genes in the Spemann organizer region during early embryonic development. Is required for normal axis formation. The chain is Myeloid differentiation primary response protein MyD88-A (myd88-a) from Xenopus laevis (African clawed frog).